Here is a 208-residue protein sequence, read N- to C-terminus: Large ribosomal subunit protein uL3 (208 aa).

Position 149 is an N5-methylglutamine (Gln149).

It belongs to the universal ribosomal protein uL3 family. In terms of assembly, part of the 50S ribosomal subunit. Forms a cluster with proteins L14 and L19. Post-translationally, methylated by PrmB.

One of the primary rRNA binding proteins, it binds directly near the 3'-end of the 23S rRNA, where it nucleates assembly of the 50S subunit. The protein is Large ribosomal subunit protein uL3 of Actinobacillus pleuropneumoniae serotype 5b (strain L20).